The following is a 610-amino-acid chain: Elongation factor 4 (610 aa).

Residues 12 to 194 (EKIRNFSIIA…QIVEKVPAPQ (183 aa)) form the tr-type G domain. Residues 24–29 (DHGKST) and 141–144 (NKID) each bind GTP.

Belongs to the TRAFAC class translation factor GTPase superfamily. Classic translation factor GTPase family. LepA subfamily.

It is found in the cell membrane. The enzyme catalyses GTP + H2O = GDP + phosphate + H(+). Its function is as follows. Required for accurate and efficient protein synthesis under certain stress conditions. May act as a fidelity factor of the translation reaction, by catalyzing a one-codon backward translocation of tRNAs on improperly translocated ribosomes. Back-translocation proceeds from a post-translocation (POST) complex to a pre-translocation (PRE) complex, thus giving elongation factor G a second chance to translocate the tRNAs correctly. Binds to ribosomes in a GTP-dependent manner. This Streptococcus thermophilus (strain ATCC BAA-250 / LMG 18311) protein is Elongation factor 4.